Here is a 98-residue protein sequence, read N- to C-terminus: NADH-ubiquinone oxidoreductase chain 4L (98 aa).

3 consecutive transmembrane segments (helical) span residues 1-21, 29-49, and 58-78; these read MPII…GMLF, SLLC…LMAL, and IVPI…LALL.

The protein belongs to the complex I subunit 4L family. Core subunit of respiratory chain NADH dehydrogenase (Complex I) which is composed of 45 different subunits.

It is found in the mitochondrion inner membrane. It catalyses the reaction a ubiquinone + NADH + 5 H(+)(in) = a ubiquinol + NAD(+) + 4 H(+)(out). Core subunit of the mitochondrial membrane respiratory chain NADH dehydrogenase (Complex I) which catalyzes electron transfer from NADH through the respiratory chain, using ubiquinone as an electron acceptor. Part of the enzyme membrane arm which is embedded in the lipid bilayer and involved in proton translocation. The protein is NADH-ubiquinone oxidoreductase chain 4L (MT-ND4L) of Trachypithecus obscurus (Dusky leaf-monkey).